The sequence spans 173 residues: NADH-ubiquinone oxidoreductase chain 6 (173 aa).

A run of 5 helical transmembrane segments spans residues 1–21 (MTYF…AVAS), 27–47 (YGVV…LSLG), 48–68 (ASFV…VVFV), 87–107 (VIGY…IGGF), and 139–159 (WGAG…FVVL).

This sequence belongs to the complex I subunit 6 family.

It is found in the mitochondrion membrane. It catalyses the reaction a ubiquinone + NADH + 5 H(+)(in) = a ubiquinol + NAD(+) + 4 H(+)(out). Its function is as follows. Core subunit of the mitochondrial membrane respiratory chain NADH dehydrogenase (Complex I) that is believed to belong to the minimal assembly required for catalysis. Complex I functions in the transfer of electrons from NADH to the respiratory chain. The immediate electron acceptor for the enzyme is believed to be ubiquinone. This is NADH-ubiquinone oxidoreductase chain 6 (MT-ND6) from Brachyramphus brevirostris (Kittlitz's murrelet).